We begin with the raw amino-acid sequence, 1707 residues long: Kinesin-like protein KIF1A (1707 aa).

Residues serine 5–isoleucine 354 form the Kinesin motor domain. 5 residues coordinate ATP: glycine 102, lysine 103, serine 104, tyrosine 105, and serine 215. Serine 104 is a Mg(2+) binding site. Residues serine 439–arginine 466 adopt a coiled-coil conformation. The FHA domain occupies threonine 525–valine 581. Coiled-coil stretches lie at residues glutamate 637–glutamine 671 and leucine 811–valine 831. The segment at glutamine 657–arginine 1105 is required for interaction with CALM1, PPFIA2 and TANC2. Disordered stretches follow at residues proline 1424 to asparagine 1462 and threonine 1536 to proline 1576. Positions leucine 1429–glycine 1453 are enriched in low complexity. The 99-residue stretch at isoleucine 1592–alanine 1690 folds into the PH domain.

The protein belongs to the TRAFAC class myosin-kinesin ATPase superfamily. Kinesin family. Unc-104 subfamily. As to quaternary structure, dimeric motor; dimerization is required for ATP-driven processive motility. Monomer in vitro. Interacts with PPFIA1 and PPFIA4. Interacts with CALM1; the interaction is increased in presence of calcium and increases neuronal dense core vesicles motility. Interacts with PPFIA2 and TANC2; both interactions allow the recruitment of neuronal dense core vesicles to dendritic spines and decrease in presence of calcium. Interacts with SYT4 (unphosphorylated) and SYT11; both interactions increase in presence of calcium. Interacts with MADD.

Its subcellular location is the cytoplasm. It localises to the cytoskeleton. The protein resides in the cell projection. It is found in the neuron projection. The protein localises to the axon. Its subcellular location is the perinuclear region. It localises to the synapse. The protein resides in the cytoplasmic vesicle. It is found in the secretory vesicle. The protein localises to the neuronal dense core vesicle membrane. The enzyme catalyses ATP + H2O + a kinesin associated with a microtubule at position (n) = ADP + phosphate a kinesin associated with a microtubule at position (n+1, toward the plus end).. Kinesin motor with a plus-end-directed microtubule motor activity, involved in anterograde axonal transport of synaptic vesicle precursors. Also required for neuronal dense core vesicles (DCVs) transport to the dendritic spines and axons. The interaction calcium-dependent with CALM1 increases vesicle motility and interaction with the scaffolding proteins PPFIA2 and TANC2 recruits DCVs to synaptic sites. The sequence is that of Kinesin-like protein KIF1A from Rattus norvegicus (Rat).